The sequence spans 129 residues: Small ribosomal subunit protein uS8 (129 aa).

It belongs to the universal ribosomal protein uS8 family. Part of the 30S ribosomal subunit.

Its function is as follows. One of the primary rRNA binding proteins, it binds directly to 16S rRNA central domain where it helps coordinate assembly of the platform of the 30S subunit. The sequence is that of Small ribosomal subunit protein uS8 from Picrophilus torridus (strain ATCC 700027 / DSM 9790 / JCM 10055 / NBRC 100828 / KAW 2/3).